The chain runs to 77 residues: Probable Fe(2+)-trafficking protein (77 aa).

It belongs to the Fe(2+)-trafficking protein family.

Could be a mediator in iron transactions between iron acquisition and iron-requiring processes, such as synthesis and/or repair of Fe-S clusters in biosynthetic enzymes. This chain is Probable Fe(2+)-trafficking protein, found in Baumannia cicadellinicola subsp. Homalodisca coagulata.